The primary structure comprises 659 residues: tRNA (guanine(26)-N(2))-dimethyltransferase (659 aa).

A mitochondrion-targeting transit peptide spans 1–23; sequence MQGSSLWLSLTFRSARVLSRARF. In terms of domain architecture, Trm1 methyltransferase spans 55–499; the sequence is TTVTEGAAKI…APASALWDIM (445 aa). Residue arginine 82 coordinates S-adenosyl-L-methionine. A Phosphoserine modification is found at serine 120. S-adenosyl-L-methionine-binding residues include arginine 166 and aspartate 184. 4 residues coordinate Zn(2+): cysteine 348, cysteine 351, cysteine 384, and cysteine 387. Position 517 is a phosphoserine (serine 517). Disordered stretches follow at residues 537-578 and 616-659; these read EDAN…AMEE and RGDQ…PGID. The Nuclear localization signal signature appears at 543-575; sequence SRQRGLKRFQANPEANWGPRPRARPGGKAADEA. The segment at 600-627 adopts a C3H1-type zinc-finger fold; it reads RLKTFPCKRFKEGTCQRGDQCCYSHSPP. Position 625 is a phosphoserine (serine 625). Phosphothreonine is present on residues threonine 628 and threonine 646.

This sequence belongs to the class I-like SAM-binding methyltransferase superfamily. Trm1 family. (Microbial infection) Cleaved between Gln-530 and Ala-531 by the 3C-like proteinase nsp5 from human coronavirus SARS-CoV-2, leading to its inactivation.

The protein localises to the mitochondrion. It localises to the nucleus. The protein resides in the cytoplasm. The enzyme catalyses guanosine(26) in tRNA + 2 S-adenosyl-L-methionine = N(2)-dimethylguanosine(26) in tRNA + 2 S-adenosyl-L-homocysteine + 2 H(+). Its function is as follows. Dimethylates a single guanine residue at position 26 of most nuclear- and mitochondrial-encoded tRNAs using S-adenosyl-L-methionine as donor of the methyl groups. tRNA guanine(26)-dimethylation is required for redox homeostasis and ensure proper cellular proliferation and oxidative stress survival. The chain is tRNA (guanine(26)-N(2))-dimethyltransferase from Homo sapiens (Human).